The sequence spans 475 residues: MSPQTETKASVGFKAGVKDYKLTYYTPEYETKDTDILAAFRVTPQPGVPPEEAGAAVAAESSTGTWTTVWTDGLTSLDRYKGRCYHIEPVAGEENQYICYVAYPLDLFEEGSVTNMFTSIEGNVFGFKALRALRLEDLRIPPAYVKTFQGPPHGIQVERDKLNKYGRPLLGCTIKPKLGLSAKNYGRAVYECLRGGLDFTKDDENVNSQPFMRWRDRFLFCAEAIYKAQAETGEXKGHYLNATAGTCEEMIKRAVFARELGVPIVMHDYLTGGFTANTSLAHYCRDNGLLLHIHRAMHAVIDRQKNHGIHFRVLAKALRMSGGDHIHSGTVVGKLEGERDITLGFVDLLRDDFIEKDRSRGIYFTQDWVSLPGVLPVASGGIHVWHMPALTEIFGDDSVLQFGGGTLGHPWGNAPGAVANRVALEACVQARNEGRDLAREGNEIIREACKWSPELAAACEVWKEIKFEFQAMDTL.

The propeptide occupies 1-2; the sequence is MS. Proline 3 carries the post-translational modification N-acetylproline. An N6,N6,N6-trimethyllysine modification is found at lysine 14. Asparagine 123 and threonine 173 together coordinate substrate. The active-site Proton acceptor is the lysine 175. Lysine 177 contacts substrate. Positions 201, 203, and 204 each coordinate Mg(2+). An N6-carboxylysine modification is found at lysine 201. Histidine 294 serves as the catalytic Proton acceptor. Positions 295, 327, and 379 each coordinate substrate.

This sequence belongs to the RuBisCO large chain family. Type I subfamily. As to quaternary structure, heterohexadecamer of 8 large chains and 8 small chains; disulfide-linked. The disulfide link is formed within the large subunit homodimers. The cofactor is Mg(2+). The disulfide bond which can form in the large chain dimeric partners within the hexadecamer appears to be associated with oxidative stress and protein turnover.

The protein localises to the plastid. It localises to the chloroplast. The catalysed reaction is 2 (2R)-3-phosphoglycerate + 2 H(+) = D-ribulose 1,5-bisphosphate + CO2 + H2O. It catalyses the reaction D-ribulose 1,5-bisphosphate + O2 = 2-phosphoglycolate + (2R)-3-phosphoglycerate + 2 H(+). In terms of biological role, ruBisCO catalyzes two reactions: the carboxylation of D-ribulose 1,5-bisphosphate, the primary event in carbon dioxide fixation, as well as the oxidative fragmentation of the pentose substrate in the photorespiration process. Both reactions occur simultaneously and in competition at the same active site. The protein is Ribulose bisphosphate carboxylase large chain of Clarkia xantiana (Gunsight clarkia).